A 320-amino-acid polypeptide reads, in one-letter code: Putative thiosulfate sulfurtransferase 2 (320 aa).

2 consecutive Rhodanese domains span residues 18–125 (HAPK…PLSS) and 154–267 (AINV…HACP). Cys233 functions as the Cysteine persulfide intermediate in the catalytic mechanism. Residue Arg238 coordinates substrate.

The enzyme catalyses thiosulfate + hydrogen cyanide = thiocyanate + sulfite + 2 H(+). May be a sulfotransferase involved in the formation of thiosulfate. In Mycobacterium bovis (strain ATCC BAA-935 / AF2122/97), this protein is Putative thiosulfate sulfurtransferase 2 (cysA2).